Reading from the N-terminus, the 265-residue chain is MNDMSRVERAVESKQTKMECRDCHVYYGDTHAIKNVNVDIADKTVTAFIGPSGCGKSTFLRCLNRMNDTIAGARVQGSFQLDGEDIYDKRVDPVQLRAKVGMVFQKPNPFPKSIYDNVAYGPRIHGLARNRAEMDEIVEKALRRGAIWDEVKDRLDAPGTGLSGGQQQRLCIARAIATEPEVLLMDEPCSALDPIATAQVEELIDELRQNYSVVIVTHSMQQAARVSQKTAFFHLGQLVEYGETGQIFTNPEDPRTESYITGRIG.

In terms of domain architecture, ABC transporter spans 18 to 260; the sequence is MECRDCHVYY…PEDPRTESYI (243 aa). An ATP-binding site is contributed by 50 to 57; that stretch reads GPSGCGKS.

This sequence belongs to the ABC transporter superfamily. Phosphate importer (TC 3.A.1.7) family. The complex is composed of two ATP-binding proteins (PstB), two transmembrane proteins (PstC and PstA) and a solute-binding protein (PstS).

It is found in the cell inner membrane. The catalysed reaction is phosphate(out) + ATP + H2O = ADP + 2 phosphate(in) + H(+). Functionally, part of the ABC transporter complex PstSACB involved in phosphate import. Responsible for energy coupling to the transport system. This chain is Phosphate import ATP-binding protein PstB, found in Ruegeria pomeroyi (strain ATCC 700808 / DSM 15171 / DSS-3) (Silicibacter pomeroyi).